A 228-amino-acid chain; its full sequence is Thrombin-like enzyme gyroxin analog (228 aa).

The 222-residue stretch at 1 to 222 (VIGGDECNIN…YLDWIQSVIA (222 aa)) folds into the Peptidase S1 domain. Cystine bridges form between Cys-7-Cys-138, Cys-28-Cys-44, Cys-78-Cys-227, Cys-117-Cys-183, Cys-149-Cys-162, and Cys-173-Cys-198. His-43 serves as the catalytic Charge relay system. Asn-45 and Asn-81 each carry an N-linked (GlcNAc...) asparagine glycan. Asp-88 serves as the catalytic Charge relay system. A glycan (N-linked (GlcNAc...) asparagine) is linked at Asn-145. Ser-177 (charge relay system) is an active-site residue. A glycan (N-linked (GlcNAc...) asparagine) is linked at Asn-224.

It belongs to the peptidase S1 family. Snake venom subfamily. As to quaternary structure, monomer. Expressed by the venom gland.

It localises to the secreted. It catalyses the reaction Selective cleavage of Arg-|-Xaa bond in fibrinogen, to form fibrin, and release fibrinopeptide A. The specificity of further degradation of fibrinogen varies with species origin of the enzyme.. With respect to regulation, inhibited competitively by amidines and guanidines, and irreversibly inhibited by diisopropylfluorophosphate. In terms of biological role, thrombin-like snake venom serine protease, that cleaves alpha-chain of fibrinogen (FGA) releases only fibrinopeptide A. Shows coagulant, esterase and amidase activities. Induces the barrel rotation syndrome in mice, which is manifested by gyroxin-like, rapid rolling motions. May also reversibly increase the permeability of the blood brain barrier (BBB) in mice. This chain is Thrombin-like enzyme gyroxin analog, found in Lachesis muta muta (Bushmaster).